Reading from the N-terminus, the 473-residue chain is Myocyte-specific enhancer factor 2C (473 aa).

The 55-residue stretch at 3-57 (RKKIQITRIMDERNRQVTFTKRKFGLMKKAYELSVLCDCEIALIIFNSTNKLFQY) folds into the MADS-box domain. Position 4 is an N6-acetyllysine (K4). The segment at residues 58–86 (ASTDMDKVLLKYTEYNEPHESRTNSDIVE) is a DNA-binding region (mef2-type). S59 carries the phosphoserine; by CK2 modification. The segment at 91 to 116 (KGLNGCDSPDPDADDSVGHSPESEDK) is disordered. Residues S98, S106, and S110 each carry the phosphoserine modification. N6-acetyllysine occurs at positions 116 and 119. The interval 180-224 (NSMSPGVTHRPPSAGNTGGLMGGDLTSGAGTSAGNGYGNPRNSPG) is disordered. Residues S222 and S228 each carry the phosphoserine modification. K234 and K239 each carry N6-acetyllysine. S240 bears the Phosphoserine mark. K252 and K264 each carry N6-acetyllysine. The interval 271-278 (SEDVDLLL) is beta domain. Phosphothreonine; by MAPK14 is present on residues T293 and T300. Residues 368–399 (ACTSTHLSQSSNLSLPSTQSLNIKSEPVSPPR) are transcription repressor. The segment covering 375–390 (SQSSNLSLPSTQSLNI) has biased composition (polar residues). The disordered stretch occupies residues 375–473 (SQSSNLSLPS…RMRLSEGWAT (99 aa)). K391 participates in a covalent cross-link: Glycyl lysine isopeptide (Lys-Gly) (interchain with G-Cter in SUMO). S396 carries the post-translational modification Phosphoserine; by CDK5. S419 is subject to Phosphoserine; by MAPK7. Over residues 419–432 (SPVDSLSSCSSSYD) the composition is skewed to low complexity. Residues 433–443 (GSDREDHRNEF) show a composition bias toward basic and acidic residues. At S445 the chain carries Phosphoserine.

It belongs to the MEF2 family. As to quaternary structure, forms a complex with class II HDACs in undifferentiating cells. On myogenic differentiation, HDACs are released into the cytoplasm allowing MEF2s to interact with other proteins for activation. Interacts with EP300 in differentiating cells; the interaction acetylates MEF2C leading to increased DNA binding and activation. Interacts with HDAC7 and CARM1. Interacts with HDAC4 and HDAC9; the interaction with HDACs represses transcriptional activity. Interacts with LPIN1. Interacts with MYOCD. Interacts with AKAP13. Interacts with FOXK1; the interaction inhibits MEF2C transactivation activity. Interacts (via N-terminus) with HABP4; this interaction decreases DNA-binding activity of MEF2C in myocardial cells in response to mechanical stress. Interacts with JPH2; interaction specifically takes place with the Junctophilin-2 N-terminal fragment cleavage product of JPH2. Interacts (via MADS box) with SOX18. Interacts with PHF7; the interaction promotes MEF2C binding to its transcription targets. Post-translationally, phosphorylation on Ser-59 enhances DNA binding activity. Phosphorylation on Ser-396 is required for Lys-391 sumoylation and inhibits transcriptional activity. In terms of processing, acetylated by p300 on several sites in diffentiating myocytes. Acetylation on Lys-4 increases DNA binding and transactivation. Sumoylated on Lys-391 with SUMO2 but not by SUMO1 represses transcriptional activity. Post-translationally, proteolytically cleaved in cerebellar granule neurons, probably by caspase 7, following neurotoxicity. Preferentially cleaves the CDK5-mediated hyperphosphorylated form which leads to neuron apoptosis and transcriptional inactivation. In terms of tissue distribution, expressed in brain and skeletal muscle.

It localises to the nucleus. The protein localises to the cytoplasm. The protein resides in the sarcoplasm. Its function is as follows. Transcription activator which binds specifically to the MEF2 element present in the regulatory regions of many muscle-specific genes. Controls cardiac morphogenesis and myogenesis, and is also involved in vascular development. Enhances transcriptional activation mediated by SOX18. Plays an essential role in hippocampal-dependent learning and memory by suppressing the number of excitatory synapses and thus regulating basal and evoked synaptic transmission. Crucial for normal neuronal development, distribution, and electrical activity in the neocortex. Necessary for proper development of megakaryocytes and platelets and for bone marrow B-lymphopoiesis. Required for B-cell survival and proliferation in response to BCR stimulation, efficient IgG1 antibody responses to T-cell-dependent antigens and for normal induction of germinal center B-cells. May also be involved in neurogenesis and in the development of cortical architecture. Isoforms that lack the repressor domain are more active than isoform 1. In Homo sapiens (Human), this protein is Myocyte-specific enhancer factor 2C.